The following is a 71-amino-acid chain: DNA-directed RNA polymerase subunit epsilon (71 aa).

It belongs to the RNA polymerase subunit epsilon family. Monomer. RNAP is composed of a core of 2 alpha, a beta and a beta' subunit. The core is associated with a delta subunit, and at least one of epsilon or omega. When a sigma factor is associated with the core the holoenzyme is formed, which can initiate transcription.

It catalyses the reaction RNA(n) + a ribonucleoside 5'-triphosphate = RNA(n+1) + diphosphate. A non-essential component of RNA polymerase (RNAP). Has a similar structure to bacteriophage T7 protein Gp2 (AC P03704), which is known to bind to RNAP in the DNA binding-cleft. Unlike Gp2 however, this protein does not inhibit transcription initiation. The protein is DNA-directed RNA polymerase subunit epsilon of Geobacillus stearothermophilus (strain DSM 13240 / CIP 106956 / 10).